Consider the following 97-residue polypeptide: Sperm protein associated with the nucleus on the X chromosome A (97 aa).

Residues 1–49 form a disordered region; that stretch reads MDKQSSAGGVKRSVPCDSNEANEMMPETPTGDSDPQPAPKKMKTSESST. The Nuclear localization signal motif lies at 37 to 45; it reads PAPKKMKTS.

Belongs to the SPAN-X family. As to expression, detected in testis and sperm.

Its subcellular location is the cytoplasm. It is found in the nucleus. The protein is Sperm protein associated with the nucleus on the X chromosome A of Homo sapiens (Human).